Consider the following 189-residue polypeptide: UPF0340 protein SAG0103 (189 aa).

It belongs to the UPF0340 family.

In Streptococcus agalactiae serotype V (strain ATCC BAA-611 / 2603 V/R), this protein is UPF0340 protein SAG0103.